Reading from the N-terminus, the 520-residue chain is Laccase-2 (520 aa).

The signal sequence occupies residues 1–19 (MRFSNAFVLVAACISSVLA). Plastocyanin-like domains follow at residues 21–145 (TKTF…FVVY), 157–305 (VDDE…LTLA), and 375–488 (TVPV…FAEA). The Cu cation site is built by His-82 and His-84. Intrachain disulfides connect Cys-103–Cys-509 and Cys-135–Cys-229. Asn-108 carries an N-linked (GlcNAc...) asparagine glycan. Cu cation is bound by residues His-127 and His-129. Asn-241 and Asn-299 each carry an N-linked (GlcNAc...) asparagine glycan. Cu cation is bound by residues His-417, His-420, His-422, His-470, Cys-471, His-472, and His-476. N-linked (GlcNAc...) asparagine glycosylation is present at Asn-492.

The protein belongs to the multicopper oxidase family. The cofactor is Cu cation.

Its subcellular location is the secreted. The enzyme catalyses 4 hydroquinone + O2 = 4 benzosemiquinone + 2 H2O. In terms of biological role, lignin degradation and detoxification of lignin-derived products. The polypeptide is Laccase-2 (lcc2) (Agaricus bisporus (White button mushroom)).